The primary structure comprises 766 residues: Pentatricopeptide repeat-containing protein At5g28460 (766 aa).

PPR repeat units lie at residues 151–181 (TIVA…LDSN), 184–218 (NSQV…ESVF), 221–257 (NRIT…GVSP), 258–292 (NSVW…KTPL), 293–327 (EAPP…KIRP), 328–358 (DVVT…MRGK), 369–404 (DSIH…RCVP), 405–439 (NAVT…EIKP), 440–474 (NVVT…GVKG), 475–509 (NVVT…GCSP), 510–544 (DAKI…GFSL), 545–579 (DLLA…GKKP), 580–614 (DSIT…GLDP), 615–650 (TVTT…KVNP), 651–685 (NTVI…MVRP), and 686–720 (NVET…SCEP).

The protein belongs to the PPR family. P subfamily.

The polypeptide is Pentatricopeptide repeat-containing protein At5g28460 (Arabidopsis thaliana (Mouse-ear cress)).